A 284-amino-acid chain; its full sequence is Probable endonuclease 4 (284 aa).

9 residues coordinate Zn(2+): His69, His109, Glu145, Asp179, His182, His216, Asp229, His231, and Glu261.

The protein belongs to the AP endonuclease 2 family. The cofactor is Zn(2+).

The catalysed reaction is Endonucleolytic cleavage to 5'-phosphooligonucleotide end-products.. Endonuclease IV plays a role in DNA repair. It cleaves phosphodiester bonds at apurinic or apyrimidinic (AP) sites, generating a 3'-hydroxyl group and a 5'-terminal sugar phosphate. The polypeptide is Probable endonuclease 4 (Chlorobium phaeobacteroides (strain BS1)).